The sequence spans 221 residues: Glutathione peroxidase (221 aa).

Positions 1–19 are cleaved as a signal peptide; the sequence is MFIQLLILSYAILLQLIAT. An N-linked (GlcNAc...) asparagine glycan is attached at asparagine 28. Residue cysteine 72 is part of the active site. 2 N-linked (GlcNAc...) asparagine glycosylation sites follow: asparagine 87 and asparagine 90.

This sequence belongs to the glutathione peroxidase family. In terms of assembly, homotetramer.

Its subcellular location is the secreted. It localises to the extracellular space. The catalysed reaction is 2 glutathione + H2O2 = glutathione disulfide + 2 H2O. The polypeptide is Glutathione peroxidase (Dirofilaria immitis (Canine heartworm)).